The chain runs to 211 residues: Dihydrofolate reductase (211 aa).

Residues Pro7–Arg210 form the DHFR domain. NADP(+)-binding positions include Ala13 and Gly20–Gly26. Glu34–Arg39 is a binding site for substrate. An NADP(+)-binding site is contributed by Arg58–Thr60. Arg74 is a binding site for substrate. NADP(+) contacts are provided by residues Ser80 to Ser82 and Gly123 to Gln130.

It belongs to the dihydrofolate reductase family.

It catalyses the reaction (6S)-5,6,7,8-tetrahydrofolate + NADP(+) = 7,8-dihydrofolate + NADPH + H(+). The protein operates within cofactor biosynthesis; tetrahydrofolate biosynthesis; 5,6,7,8-tetrahydrofolate from 7,8-dihydrofolate: step 1/1. In terms of biological role, key enzyme in folate metabolism. Catalyzes an essential reaction for de novo glycine and purine synthesis, and for DNA precursor synthesis. The sequence is that of Dihydrofolate reductase (DFR1) from Saccharomyces cerevisiae (strain ATCC 204508 / S288c) (Baker's yeast).